Reading from the N-terminus, the 531-residue chain is Squalene epoxidase 1 (531 aa).

The chain crosses the membrane as a helical span at residues 9 to 29 (ILPLLISSLLISFVAFYGFFV). FAD contacts are provided by residues 70-71 (VA), 90-91 (ER), Arg98, Arg169, Val185, Asp347, and Met360. The next 2 helical transmembrane spans lie at 458–478 (LVCH…IPFP) and 483–503 (IWLG…IIKA).

Belongs to the squalene monooxygenase family. FAD serves as cofactor. Expressed in seedlings, leaves, stems, inflorescences, sepals, style and siliques. Expressed in expanded cotyledons, root tips and cortical cells of the root elongation zone, but not in root hair cells. In leaves, expressed in most cells, with a very strong expression in stomata.

The protein resides in the membrane. It carries out the reaction squalene + reduced [NADPH--hemoprotein reductase] + O2 = (S)-2,3-epoxysqualene + oxidized [NADPH--hemoprotein reductase] + H2O + H(+). It functions in the pathway terpene metabolism; lanosterol biosynthesis; lanosterol from farnesyl diphosphate: step 2/3. Functionally, catalyzes the stereospecific oxidation of squalene to (S)-2,3-epoxysqualene, and is considered to be a rate-limiting enzyme in steroid biosynthesis. Can produce not only oxidosqualene, but also 2,3:22,23-dioxidosqualene. Main squalene epoxidase in the root. Sqe1 mutants may show defects in membrane lipid rafts, impairing the correct localization of RHD2 NADPH oxidase and the proper polarized production of ROS. In Arabidopsis thaliana (Mouse-ear cress), this protein is Squalene epoxidase 1 (SQE1).